The following is a 249-amino-acid chain: tRNA (guanine-N(1)-)-methyltransferase (249 aa).

S-adenosyl-L-methionine-binding positions include glycine 112 and 132-137; that span reads LGDFVL.

The protein belongs to the RNA methyltransferase TrmD family. Homodimer.

It is found in the cytoplasm. The enzyme catalyses guanosine(37) in tRNA + S-adenosyl-L-methionine = N(1)-methylguanosine(37) in tRNA + S-adenosyl-L-homocysteine + H(+). Its function is as follows. Specifically methylates guanosine-37 in various tRNAs. The chain is tRNA (guanine-N(1)-)-methyltransferase from Citrifermentans bemidjiense (strain ATCC BAA-1014 / DSM 16622 / JCM 12645 / Bem) (Geobacter bemidjiensis).